A 210-amino-acid polypeptide reads, in one-letter code: MLKMNVKKALVILVALALVAAGIYLLKRPEEELRVNTDLENAKLSDFWSAVVKAANVQNETANLEWLRLKVEDGKIHLLHLEFNGNGVDGRKRVYFVDVDSTGRVRINSGTVEQSISTRHPTKVFRELDALGLYSIGGSYTLSVDFEWGDIGFDSTVTPLYLLENGELKPLREVVFHTDWPVCEIAVCKNGCEVWFIREDLSRASEVVFG.

A signal peptide spans 1 to 21 (MLKMNVKKALVILVALALVAA).

This is an uncharacterized protein from Archaeoglobus fulgidus (strain ATCC 49558 / DSM 4304 / JCM 9628 / NBRC 100126 / VC-16).